Consider the following 209-residue polypeptide: MICOS complex subunit mic19 (209 aa).

Coiled-coil stretches lie at residues 48–86 (LELEIQNRVAKELERLRAREQQTLAEIEKRLSEAKDTGS) and 127–156 (EVAAVNKELNRESVNSEIEELRVKLEGRKK).

It belongs to the MICOS complex subunit Mic19 family. As to quaternary structure, component of the mitochondrial contact site and cristae organizing system (MICOS) complex.

The protein resides in the mitochondrion inner membrane. In terms of biological role, component of the MICOS complex, a large protein complex of the mitochondrial inner membrane that plays crucial roles in the maintenance of crista junctions, inner membrane architecture, and formation of contact sites to the outer membrane. Involved in osmoadaptation. This Emericella nidulans (strain FGSC A4 / ATCC 38163 / CBS 112.46 / NRRL 194 / M139) (Aspergillus nidulans) protein is MICOS complex subunit mic19.